Reading from the N-terminus, the 373-residue chain is Asporin (373 aa).

An N-terminal signal peptide occupies residues 1–15; the sequence is MKEYVMLLLLAVCSA. The propeptide occupies 16-32; it reads KPFFSPSHTALKNMMLK. O-linked (GalNAc...) serine glycosylation is present at Ser-48. In terms of domain architecture, LRRNT spans 59-95; the sequence is FFPFDLFPTCPFGCQCYSRVVHCSDLGLTSVPNNIPF. Intrachain disulfides connect Cys-68/Cys-74 and Cys-72/Cys-81. LRR repeat units follow at residues 96–117, 120–141, 144–166, 167–186, 189–212, 235–255, 259–280, 283–305, 306–327, 328–349, and 350–373; these read DTRM…DFKG, SLYA…TFLT, KLRR…PKSL, AELR…TFKG, ALHV…AFEG, TLLE…EDLK, ELQR…TFAN, RVRE…QELK, YLQI…DFCP, TVPK…PMKY, and WEIQ…NVGK. The interaction with TGFB1 stretch occupies residues 159–205; the sequence is PLNLPKSLAELRIHDNKVKKIQKDTFKGMNALHVLEMSANPLENNGI. Asn-275 is a glycosylation site (N-linked (GlcNAc...) asparagine). Cys-326 and Cys-359 form a disulfide bridge.

It belongs to the small leucine-rich proteoglycan (SLRP) family. SLRP class I subfamily. Interacts with type I collagen. DCN can inhibit collagen binding. Interacts with TGFB1, TGFB2 and TGFB3. DCN, BGN, and FMOD inhibit binding to TGFB1. Interacts with BMP2. Interacts in vitro with type II collagen. In terms of tissue distribution, higher expression in heart, also detected in kidney, stomach, testes, and skin but only weakly in lung, skeletal muscle, small intestine, and thymus. Expressed specifically and predominantly in the periodontal ligament (PDL). During tooth development, strong expression is seen in the dental follicle, which is the progenitor tissue that forms cementum, alveolar bone, and the PDL. Expressed in the perichondria of the maxilla, mandible, vertebrae, and long bones. Predominantly expressed in the perichondrium/periosteum of long bones (at protein level).

The protein localises to the secreted. It is found in the extracellular space. Its subcellular location is the extracellular matrix. Binds calcium and plays a role in osteoblast-driven collagen biomineralization activity. Critical regulator of TGF-beta in articular cartilage and plays an essential role in cartilage homeostasis and osteoarthritis (OA) pathogenesis. Negatively regulates chondrogenesis in the articular cartilage by blocking the TGF-beta/receptor interaction on the cell surface and inhibiting the canonical TGF-beta/Smad signal. Negatively regulates periodontal ligament (PDL) differentiation and mineralization to ensure that the PDL is not ossified and to maintain homeostasis of the tooth-supporting system. Inhibits BMP2-induced cytodifferentiation of PDL cells by preventing its binding to BMPR1B/BMP type-1B receptor, resulting in inhibition of BMP-dependent activation of SMAD proteins. Inhibits the interaction between TGFB1 and TGF-beta receptor type II in the presence of heparin/heparan sulfate in vitro. This chain is Asporin (Aspn), found in Mus musculus (Mouse).